The primary structure comprises 212 residues: Thiamine-phosphate synthase (212 aa).

38–42 contributes to the 4-amino-2-methyl-5-(diphosphooxymethyl)pyrimidine binding site; it reads QLREK. The Mg(2+) site is built by Asp71 and Asp90. Lys138 contacts 4-amino-2-methyl-5-(diphosphooxymethyl)pyrimidine. 2-[(2R,5Z)-2-carboxy-4-methylthiazol-5(2H)-ylidene]ethyl phosphate is bound at residue Gly166.

It belongs to the thiamine-phosphate synthase family. Mg(2+) serves as cofactor.

The enzyme catalyses 2-[(2R,5Z)-2-carboxy-4-methylthiazol-5(2H)-ylidene]ethyl phosphate + 4-amino-2-methyl-5-(diphosphooxymethyl)pyrimidine + 2 H(+) = thiamine phosphate + CO2 + diphosphate. The catalysed reaction is 2-(2-carboxy-4-methylthiazol-5-yl)ethyl phosphate + 4-amino-2-methyl-5-(diphosphooxymethyl)pyrimidine + 2 H(+) = thiamine phosphate + CO2 + diphosphate. It catalyses the reaction 4-methyl-5-(2-phosphooxyethyl)-thiazole + 4-amino-2-methyl-5-(diphosphooxymethyl)pyrimidine + H(+) = thiamine phosphate + diphosphate. Its pathway is cofactor biosynthesis; thiamine diphosphate biosynthesis; thiamine phosphate from 4-amino-2-methyl-5-diphosphomethylpyrimidine and 4-methyl-5-(2-phosphoethyl)-thiazole: step 1/1. Condenses 4-methyl-5-(beta-hydroxyethyl)thiazole monophosphate (THZ-P) and 2-methyl-4-amino-5-hydroxymethyl pyrimidine pyrophosphate (HMP-PP) to form thiamine monophosphate (TMP). In Chlamydia caviae (strain ATCC VR-813 / DSM 19441 / 03DC25 / GPIC) (Chlamydophila caviae), this protein is Thiamine-phosphate synthase.